The following is a 707-amino-acid chain: Polyribonucleotide nucleotidyltransferase (707 aa).

Mg(2+) is bound by residues D488 and D494. Positions 554-613 (PRLFTMKINQDKIREVIGKGGETIRSITAETGTEINIAEDGTITIAATTQEAGDAAKKRI) constitute a KH domain. In terms of domain architecture, S1 motif spans 623-693 (GKVYEGTVVK…DRGRVRLSIK (71 aa)).

The protein belongs to the polyribonucleotide nucleotidyltransferase family. Mg(2+) serves as cofactor.

The protein localises to the cytoplasm. It carries out the reaction RNA(n+1) + phosphate = RNA(n) + a ribonucleoside 5'-diphosphate. In terms of biological role, involved in mRNA degradation. Catalyzes the phosphorolysis of single-stranded polyribonucleotides processively in the 3'- to 5'-direction. This chain is Polyribonucleotide nucleotidyltransferase, found in Neisseria meningitidis serogroup B (strain ATCC BAA-335 / MC58).